The primary structure comprises 549 residues: Undecaprenyl phosphate-alpha-4-amino-4-deoxy-L-arabinose arabinosyl transferase (549 aa).

Helical transmembrane passes span 9–29 (LLLIAFGLFYLVPLSNHGLWI), 80–100 (LFGVRIASVVATALSVLLAYL), 112–132 (SLACALLYASFGLIAGQSGYA), 136–156 (PQFTFWVNLSLVALWHALDAG), 176–196 (FLTKGFLAWLLPVLVALPYML), 204–224 (LLGYGALAVLAALLVCLPWAL), 256–276 (PWWFYLPLLAVACLPWSGLLP), 288–308 (QAPVVFLALWLLLPLAFFSLS), 312–332 (LPTYIMPCLLPLALLMGHALV), 346–366 (NGLLNLGLALLALAALAYLQL), 376–396 (FELFLVLLVIGAWAAAGLAQW), and 402–422 (AWAAPLLASWVLIALLPAAMP).

It belongs to the glycosyltransferase 83 family.

The protein localises to the cell inner membrane. It carries out the reaction 4-amino-4-deoxy-alpha-L-arabinopyranosyl di-trans,octa-cis-undecaprenyl phosphate + lipid IVA = lipid IIA + di-trans,octa-cis-undecaprenyl phosphate.. The protein operates within lipopolysaccharide metabolism; 4-amino-4-deoxy-beta-L-arabinose-lipid A biosynthesis. Its function is as follows. Catalyzes the transfer of the L-Ara4N moiety of the glycolipid undecaprenyl phosphate-alpha-L-Ara4N to lipid A. The modified arabinose is attached to lipid A and is required for resistance to polymyxin and cationic antimicrobial peptides. The sequence is that of Undecaprenyl phosphate-alpha-4-amino-4-deoxy-L-arabinose arabinosyl transferase from Pseudomonas aeruginosa (strain ATCC 15692 / DSM 22644 / CIP 104116 / JCM 14847 / LMG 12228 / 1C / PRS 101 / PAO1).